A 233-amino-acid chain; its full sequence is Cilia- and flagella-associated protein 299 (233 aa).

The protein localises to the cytoplasm. It localises to the nucleus. Its function is as follows. May be involved in spermatogenesis. This Xenopus laevis (African clawed frog) protein is Cilia- and flagella-associated protein 299.